Here is a 23-residue protein sequence, read N- to C-terminus: Augerpeptide hhe7a (23 aa).

Intrachain disulfides connect Cys3/Cys11, Cys6/Cys19, and Cys10/Cys22.

In terms of tissue distribution, expressed by the venom duct.

The protein resides in the secreted. Functionally, causes abnormal twist followed by immobility when injected into C.elegans. The protein is Augerpeptide hhe7a of Hastula hectica (Sea snail).